The sequence spans 149 residues: Probable cyclic pyranopterin monophosphate synthase (149 aa).

Residues 67–69 and 103–104 contribute to the substrate site; these read LCH and ME. D118 is an active-site residue.

It belongs to the MoaC family. As to quaternary structure, homohexamer; trimer of dimers.

It catalyses the reaction (8S)-3',8-cyclo-7,8-dihydroguanosine 5'-triphosphate = cyclic pyranopterin phosphate + diphosphate. The protein operates within cofactor biosynthesis; molybdopterin biosynthesis. In terms of biological role, catalyzes the conversion of (8S)-3',8-cyclo-7,8-dihydroguanosine 5'-triphosphate to cyclic pyranopterin monophosphate (cPMP). This Saccharolobus solfataricus (strain ATCC 35092 / DSM 1617 / JCM 11322 / P2) (Sulfolobus solfataricus) protein is Probable cyclic pyranopterin monophosphate synthase.